Here is a 375-residue protein sequence, read N- to C-terminus: Protein MGF 360-4L (375 aa).

This sequence belongs to the asfivirus MGF 360 family.

Plays a role in virus cell tropism, and may be required for efficient virus replication in macrophages. The chain is Protein MGF 360-4L from Ornithodoros (relapsing fever ticks).